The primary structure comprises 191 residues: Leucyl/phenylalanyl-tRNA--protein transferase (191 aa).

It belongs to the L/F-transferase family.

It localises to the cytoplasm. The enzyme catalyses N-terminal L-lysyl-[protein] + L-leucyl-tRNA(Leu) = N-terminal L-leucyl-L-lysyl-[protein] + tRNA(Leu) + H(+). It carries out the reaction N-terminal L-arginyl-[protein] + L-leucyl-tRNA(Leu) = N-terminal L-leucyl-L-arginyl-[protein] + tRNA(Leu) + H(+). It catalyses the reaction L-phenylalanyl-tRNA(Phe) + an N-terminal L-alpha-aminoacyl-[protein] = an N-terminal L-phenylalanyl-L-alpha-aminoacyl-[protein] + tRNA(Phe). Functions in the N-end rule pathway of protein degradation where it conjugates Leu, Phe and, less efficiently, Met from aminoacyl-tRNAs to the N-termini of proteins containing an N-terminal arginine or lysine. This is Leucyl/phenylalanyl-tRNA--protein transferase from Herpetosiphon aurantiacus (strain ATCC 23779 / DSM 785 / 114-95).